The chain runs to 223 residues: Cytidylate kinase (223 aa).

An ATP-binding site is contributed by 11–19; it reads GPAGVGKST.

It belongs to the cytidylate kinase family. Type 1 subfamily.

It localises to the cytoplasm. The catalysed reaction is CMP + ATP = CDP + ADP. It catalyses the reaction dCMP + ATP = dCDP + ADP. This is Cytidylate kinase from Maridesulfovibrio salexigens (strain ATCC 14822 / DSM 2638 / NCIMB 8403 / VKM B-1763) (Desulfovibrio salexigens).